A 957-amino-acid chain; its full sequence is MTQTLSHLENRDAFIERHIGPGVDQQQEMLRTVGADSLDALISQIVPADIQLATPPDVGDAATEFAALAELKAIAGRNKRFKNYIGMGYTAVHTPPVILRNMLENPGWYTAYTPYQPEVSQGRLEALLNFQQVTLDLTGLDIASASLLDEATAAAEAMAMAKRVSKLKNANRFFVAADVHPQTLDVVRTRAETFGFEVIVDDAPKALDHQDLFGVLLQQVGTTGEVHDYRELISELKSRKVIVSVAADFMALVLLTAPGKQGADIVFGSAQRFGVPMGYGGPHAAFFAASDEFKRSMPGRIIGVSKDAAGRTALRMAMQTREQHIRREKANSNICTSQVLLANIASLYAVFHGPAGLKRIASRIHRFADILAAGLQHKGLKLRHATWFDTLCVEVADKATVLARAEASEINLRSDIPGAVGITLDETTTRADVQALLRVVTGEDATFDIDALDKEVAHDSRSIPAAMLRDDAILTHPVFNRYHSETEMMRYMHSLERKDLALNQAMIPLGSCTMKLNAAAEMIPITWPEFAELHPFCPADQAEGYLQMISQLSDWLVKLTGYDALCMQPNSGAQGEYAGLLAIRHYHESRNEGHRDICLIPSSAHGTNPASAQMAGMQVVVVACDKQGNIDLADLRAKAETAGDKLSCIMVTYPSTHGVYEETIREVCDIVHQYGGQVYLDGANMNAQVGITSPGYIGADVSHLNLHKTFCIPHGGGGPGMGPIGVKAHLAPFVPGHSVVQIEGMLTSQGAVSAAPFGSASILPISWMYIRMMGSQGLKKASQTAILNANYIASRLKDAYPVLYTGRDGRVAHECILDIRPLKEATGISELDIAKRLIDYGFHAPTMSFPVAGTLMVEPTESESKVELDRFIDAMLAIRGEIDRVAQGEWPQDDNPLVNAPHVQRELAQEWEHAYSRELAAFPAGFENKYWPTVKRLDDVYGDRNLFCSCVPMSEYQ.

Lys-708 carries the N6-(pyridoxal phosphate)lysine modification.

The protein belongs to the GcvP family. In terms of assembly, the glycine cleavage system is composed of four proteins: P, T, L and H. Pyridoxal 5'-phosphate is required as a cofactor.

The catalysed reaction is N(6)-[(R)-lipoyl]-L-lysyl-[glycine-cleavage complex H protein] + glycine + H(+) = N(6)-[(R)-S(8)-aminomethyldihydrolipoyl]-L-lysyl-[glycine-cleavage complex H protein] + CO2. The glycine cleavage system catalyzes the degradation of glycine. The P protein binds the alpha-amino group of glycine through its pyridoxal phosphate cofactor; CO(2) is released and the remaining methylamine moiety is then transferred to the lipoamide cofactor of the H protein. This is Glycine dehydrogenase (decarboxylating) from Cronobacter sakazakii (strain ATCC BAA-894) (Enterobacter sakazakii).